A 235-amino-acid polypeptide reads, in one-letter code: Probable GTP-binding protein EngB (235 aa).

Positions 23 to 219 constitute an EngB-type G domain; the sequence is QVPEIAFAGR…NDKIIELLGL (197 aa). GTP-binding positions include 31–38, 58–62, 92–95, 159–162, and 193–200; these read GRSNAGKS, GRTQH, DLPG, TKSD, and FTAQMFSA. Positions 38 and 60 each coordinate Mg(2+).

This sequence belongs to the TRAFAC class TrmE-Era-EngA-EngB-Septin-like GTPase superfamily. EngB GTPase family. Mg(2+) serves as cofactor.

Its function is as follows. Necessary for normal cell division and for the maintenance of normal septation. The protein is Probable GTP-binding protein EngB of Janthinobacterium sp. (strain Marseille) (Minibacterium massiliensis).